The sequence spans 55 residues: ATP synthase F(0) complex subunit 8 (55 aa).

The chain crosses the membrane as a helical span at residues 4 to 24 (LLPTPWFTIFIYAWMVLLAVI).

This sequence belongs to the ATPase protein 8 family. As to quaternary structure, component of the ATP synthase complex composed at least of ATP5F1A/subunit alpha, ATP5F1B/subunit beta, ATP5MC1/subunit c (homooctomer), MT-ATP6/subunit a, MT-ATP8/subunit 8, ATP5ME/subunit e, ATP5MF/subunit f, ATP5MG/subunit g, ATP5MK/subunit k, ATP5MJ/subunit j, ATP5F1C/subunit gamma, ATP5F1D/subunit delta, ATP5F1E/subunit epsilon, ATP5PF/subunit F6, ATP5PB/subunit b, ATP5PD/subunit d, ATP5PO/subunit OSCP. ATP synthase complex consists of a soluble F(1) head domain (subunits alpha(3) and beta(3)) - the catalytic core - and a membrane F(0) domain - the membrane proton channel (subunits c, a, 8, e, f, g, k and j). These two domains are linked by a central stalk (subunits gamma, delta, and epsilon) rotating inside the F1 region and a stationary peripheral stalk (subunits F6, b, d, and OSCP).

It localises to the mitochondrion membrane. Functionally, subunit 8, of the mitochondrial membrane ATP synthase complex (F(1)F(0) ATP synthase or Complex V) that produces ATP from ADP in the presence of a proton gradient across the membrane which is generated by electron transport complexes of the respiratory chain. ATP synthase complex consist of a soluble F(1) head domain - the catalytic core - and a membrane F(1) domain - the membrane proton channel. These two domains are linked by a central stalk rotating inside the F(1) region and a stationary peripheral stalk. During catalysis, ATP synthesis in the catalytic domain of F(1) is coupled via a rotary mechanism of the central stalk subunits to proton translocation. In vivo, can only synthesize ATP although its ATP hydrolase activity can be activated artificially in vitro. Part of the complex F(0) domain. In Dicentrarchus labrax (European seabass), this protein is ATP synthase F(0) complex subunit 8.